Reading from the N-terminus, the 262-residue chain is 5-methyltetrahydrofolate:corrinoid/iron-sulfur protein co-methyltransferase (262 aa).

The Pterin-binding domain occupies methionine 1 to leucine 246. Asparagine 96 and aspartate 160 together coordinate (6S)-5-methyl-5,6,7,8-tetrahydrofolate. A Ca(2+)-binding site is contributed by lysine 184. Positions 199, 202, and 207 each coordinate (6S)-5-methyl-5,6,7,8-tetrahydrofolate. Glutamine 202–asparagine 203 provides a ligand contact to methylcob(III)alamin. Glycine 222 and aspartate 224 together coordinate Ca(2+).

It belongs to the vitamin-B12 dependent methionine synthase family. In terms of assembly, heterohexamer composed of 2 subunits of AcsC, 2 subunits of AcsD and 2 subunits of AcsE. Ca(2+) serves as cofactor.

The enzyme catalyses methyl-Co(III)-[corrinoid Fe-S protein] + (6S)-5,6,7,8-tetrahydrofolate = Co(I)-[corrinoid Fe-S protein] + (6S)-5-methyl-5,6,7,8-tetrahydrofolate + H(+). In terms of biological role, methyltransferase that mediates the transfer of a N5-methyl group of (6S)-methyltetrahydrofolate to the 5-methoxybenzimidazolylcobamide cofactor of a corrinoid/Fe-S protein (AcsC/AcsD) in the anaerobic acetyl-CoA pathway (Wood-Ljungdahl pathway) of carbon monoxide and carbon dioxide fixation. This Moorella thermoacetica (Clostridium thermoaceticum) protein is 5-methyltetrahydrofolate:corrinoid/iron-sulfur protein co-methyltransferase (acsE).